A 581-amino-acid chain; its full sequence is NADH-quinone oxidoreductase subunit C/D (581 aa).

The tract at residues 1 to 172 is NADH dehydrogenase I subunit C; it reads MSASELVTEL…PLFNMTASLF (172 aa). The NADH dehydrogenase I subunit D stretch occupies residues 196–581; sequence ELMILNYGPH…IDYVMSDVDR (386 aa).

This sequence in the N-terminal section; belongs to the complex I 30 kDa subunit family. In the C-terminal section; belongs to the complex I 49 kDa subunit family. As to quaternary structure, NDH-1 is composed of 13 different subunits. Subunits NuoB, CD, E, F, and G constitute the peripheral sector of the complex.

Its subcellular location is the cell inner membrane. The enzyme catalyses a quinone + NADH + 5 H(+)(in) = a quinol + NAD(+) + 4 H(+)(out). Its function is as follows. NDH-1 shuttles electrons from NADH, via FMN and iron-sulfur (Fe-S) centers, to quinones in the respiratory chain. The immediate electron acceptor for the enzyme in this species is believed to be ubiquinone. Couples the redox reaction to proton translocation (for every two electrons transferred, four hydrogen ions are translocated across the cytoplasmic membrane), and thus conserves the redox energy in a proton gradient. The chain is NADH-quinone oxidoreductase subunit C/D from Rhodopseudomonas palustris (strain TIE-1).